Here is a 622-residue protein sequence, read N- to C-terminus: Dehydrogenase xptC (622 aa).

Residues 1 to 18 form the signal peptide; it reads MAKLSVILLFRSLLLCGA. FAD-binding positions include 47–48, 68–69, and 123–126; these read VS, EA, and NAMI. 5 N-linked (GlcNAc...) asparagine glycosylation sites follow: Asn-160, Asn-173, Asn-357, Asn-364, and Asn-480. Position 598–599 (598–599) interacts with FAD; that stretch reads PM.

The protein belongs to the GMC oxidoreductase family. In terms of assembly, homodimer. The cofactor is FAD.

It participates in secondary metabolite biosynthesis. Its function is as follows. Dehydrogenase involved in the conversion of monodictyphenone to the prenyl xanthones such as emericellin, shamixanthone and epishamixanthone. Monodictyphenone is first converted to variecoxanthone A via a paeciloxanthone intermediate by the consecutive actions of the FAD-dependent monooxygenase mdpD and the xanthone prenyltransferase xptB. XptB catalyzes regular O-prenylation at the hydroxy group of C-7 of the xanthone ring. Variecoxanthone A is further prenylated to emericellin by xptA before being reduced to shamixanthone and epishamixanthone by the dehydrogenase xptC. This is Dehydrogenase xptC from Emericella nidulans (strain FGSC A4 / ATCC 38163 / CBS 112.46 / NRRL 194 / M139) (Aspergillus nidulans).